Consider the following 125-residue polypeptide: Protein ApaG (125 aa).

Positions 3 to 125 constitute an ApaG domain; that stretch reads TAVTEGIEVT…FPLVVPGSLN (123 aa).

The chain is Protein ApaG from Anaeromyxobacter dehalogenans (strain 2CP-C).